A 67-amino-acid polypeptide reads, in one-letter code: Probable Sec-independent protein translocase protein TatE (67 aa).

Residues 1–21 traverse the membrane as a helical segment; the sequence is MEGISIAKLLIIGALIVLLFG. The segment at 44 to 67 is disordered; that stretch reads KDEDTSAARTTAEETPAERVSHKD.

The protein belongs to the TatA/E family. TatE subfamily.

The protein resides in the cell inner membrane. Functionally, part of the twin-arginine translocation (Tat) system that transports large folded proteins containing a characteristic twin-arginine motif in their signal peptide across membranes. TatE shares overlapping functions with TatA. This is Probable Sec-independent protein translocase protein TatE from Pantoea ananatis (strain LMG 20103).